A 282-amino-acid polypeptide reads, in one-letter code: Aldo-keto reductase MUL_1987 (282 aa).

Y57 functions as the Proton donor in the catalytic mechanism. The NADPH site is built by L197, I235, S238, T246, N247, and R273.

The protein belongs to the aldo/keto reductase family.

This is Aldo-keto reductase MUL_1987 from Mycobacterium ulcerans (strain Agy99).